A 75-amino-acid chain; its full sequence is Antimicrobial peptide Meucin-49-1 (75 aa).

Residues 1 to 22 (MNKKILLVIFIVTMLIVDEVNS) form the signal peptide.

This sequence belongs to the non-disulfide-bridged peptide (NDBP) superfamily. Long chain multifunctional peptide (group 2) family. Expressed by the venom gland.

The protein resides in the secreted. Functionally, antimicrobial peptide. This Mesobuthus eupeus (Lesser Asian scorpion) protein is Antimicrobial peptide Meucin-49-1.